The primary structure comprises 236 residues: Purine nucleoside phosphorylase DeoD-type (236 aa).

Histidine 5 lines the a purine D-ribonucleoside pocket. Residues glycine 21, arginine 25, arginine 44, and 88–91 contribute to the phosphate site; that span reads RIGS. A purine D-ribonucleoside-binding positions include 180–182 and 204–205; these read EME and SD. The Proton donor role is filled by aspartate 205.

Belongs to the PNP/UDP phosphorylase family. Homohexamer; trimer of homodimers.

It carries out the reaction a purine D-ribonucleoside + phosphate = a purine nucleobase + alpha-D-ribose 1-phosphate. It catalyses the reaction a purine 2'-deoxy-D-ribonucleoside + phosphate = a purine nucleobase + 2-deoxy-alpha-D-ribose 1-phosphate. Catalyzes the reversible phosphorolytic breakdown of the N-glycosidic bond in the beta-(deoxy)ribonucleoside molecules, with the formation of the corresponding free purine bases and pentose-1-phosphate. The protein is Purine nucleoside phosphorylase DeoD-type of Tolumonas auensis (strain DSM 9187 / NBRC 110442 / TA 4).